A 358-amino-acid chain; its full sequence is 3-dehydroquinate synthase (358 aa).

Residues 70–75 (DGEQYK), 104–108 (GVIGD), 128–129 (TT), Lys141, Lys150, and 168–171 (CLST) contribute to the NAD(+) site. Zn(2+) is bound by residues Glu183, His246, and His263.

This sequence belongs to the sugar phosphate cyclases superfamily. Dehydroquinate synthase family. Requires Co(2+) as cofactor. It depends on Zn(2+) as a cofactor. NAD(+) serves as cofactor.

The protein localises to the cytoplasm. The catalysed reaction is 7-phospho-2-dehydro-3-deoxy-D-arabino-heptonate = 3-dehydroquinate + phosphate. It participates in metabolic intermediate biosynthesis; chorismate biosynthesis; chorismate from D-erythrose 4-phosphate and phosphoenolpyruvate: step 2/7. Functionally, catalyzes the conversion of 3-deoxy-D-arabino-heptulosonate 7-phosphate (DAHP) to dehydroquinate (DHQ). The protein is 3-dehydroquinate synthase of Shewanella woodyi (strain ATCC 51908 / MS32).